The sequence spans 102 residues: NADH-quinone oxidoreductase subunit K (102 aa).

3 helical membrane passes run 6–26 (MEHG…GLLI), 30–50 (LLFI…AFVV), and 65–85 (ILVI…LLLL).

Belongs to the complex I subunit 4L family. In terms of assembly, NDH-1 is composed of 14 different subunits. Subunits NuoA, H, J, K, L, M, N constitute the membrane sector of the complex.

It is found in the cell inner membrane. The enzyme catalyses a quinone + NADH + 5 H(+)(in) = a quinol + NAD(+) + 4 H(+)(out). In terms of biological role, NDH-1 shuttles electrons from NADH, via FMN and iron-sulfur (Fe-S) centers, to quinones in the respiratory chain. The immediate electron acceptor for the enzyme in this species is believed to be ubiquinone. Couples the redox reaction to proton translocation (for every two electrons transferred, four hydrogen ions are translocated across the cytoplasmic membrane), and thus conserves the redox energy in a proton gradient. The chain is NADH-quinone oxidoreductase subunit K from Aeromonas salmonicida (strain A449).